We begin with the raw amino-acid sequence, 3573 residues long: Zinc finger homeobox protein 4 (3573 aa).

A compositionally biased stretch (polar residues) spans 1–28 (METCDSPTISRQENGQSTSKLCGTTQLD). Disordered stretches follow at residues 1–54 (METC…LRTD), 425–479 (LSHS…DTYS), and 522–606 (TSSS…GSPG). Composition is skewed to basic and acidic residues over residues 39–54 (EPDRENSSTDDNLRTD) and 434–452 (KLSESKDQENNCERQKETN). The segment covering 468–479 (EPVEEEDEDTYS) has biased composition (acidic residues). Polar residues predominate over residues 585–599 (SVTPHQHSFTPSTPS). 3 C2H2-type zinc fingers span residues 609 to 632 (IECPKCDTVLGSSRSLGGHMTMMH), 640 to 663 (LKCPKCNWHYKYQQTLEAHMKEKH), and 695 to 719 (FRCEVCNYSTTTKGNLSIHMQSDKH). The C2H2-type 4; degenerate zinc-finger motif lies at 763-785 (WRCEVCDYETNVARNLRIHMTSE). 3 C2H2-type zinc fingers span residues 913 to 937 (YQCKLCNYNTQLKANFQLHCKTDKH), 969 to 991 (LKCNACDYYTNSVDKLRLHTTNH), and 1017 to 1041 (YYCALCDYSTKVKLNLVQHVRSVKH). Residues 1096–1132 (GEDTEGSAKSTSVAIGDDKDSSERDNTEAKKSSKDSV) form a disordered region. The span at 1111-1129 (GDDKDSSERDNTEAKKSSK) shows a compositional bias: basic and acidic residues. 2 consecutive C2H2-type zinc fingers follow at residues 1168-1191 (YQCPYCNYNSRDPNRIQMHVLSQH) and 1197-1220 (ICCPLCQDVLSNKMHLQLHLTHLH). A disordered region spans residues 1250-1340 (AASEKSERDT…EQQKKQQLSV (91 aa)). The segment covering 1277–1306 (VDEKSTPGTDESKPGMEIKSEEQKPPKESA) has biased composition (basic and acidic residues). Residues 1322 to 1340 (TDSMPDQLNEQQKKQQLSV) are compositionally biased toward polar residues. C2H2-type zinc fingers lie at residues 1348-1370 (YRCNHCSLAFKTMQKLQIHSQYH) and 1376-1399 (TMCSLCQRSFRTFQALKKHLEAGH). Residues 1442–1476 (YEMEQEGKASPVGSDSSSIPDDMGSEPKRTLPFRK) form a disordered region. C2H2-type zinc fingers lie at residues 1492–1518 (YKCTVCKESFTQKNILLVHYNSVSHLH) and 1544–1568 (YKCSICNVAYSQSSTLEIHMRSVLH). Disordered regions lie at residues 1577-1596 (LEPSGNISSGNSVAGNVNSP) and 1795-1843 (YKES…IASG). Low complexity predominate over residues 1580–1596 (SGNISSGNSVAGNVNSP). Positions 1795-1830 (YKESEEISEKQEKPKQEFTNESEGLKENKDMKKPKS) are enriched in basic and acidic residues. The C2H2-type 14 zinc finger occupies 1886–1909 (LECGTCSKLFSNILILKSHQEHVH). The disordered stretch occupies residues 1933–2013 (YPISPSSPET…PSAPPQVQLP (81 aa)). 2 stretches are compositionally biased toward pro residues: residues 1940–1962 (PETPPPPPPPPPPPPPPPPPTPS) and 1980–2007 (LQAPPPTPPPPPPPPPPPPPPPPPPSAP). DNA-binding regions (homeobox) lie at residues 2072–2131 (FKRP…RQRN) and 2169–2228 (KRSS…RKSY). Residues 2255–2279 (YQCKKCSVVFPRIFDLITHQKKQCY) form a C2H2-type 15; degenerate zinc finger. 2 disordered regions span residues 2278-2300 (CYKDEDDDAQDESQTEDSMDASD) and 2318-2426 (SLAV…TPLQ). Acidic residues predominate over residues 2281-2297 (DEDDDAQDESQTEDSMD). Residues 2318–2334 (SLAVTAASSGSGSSTPL) are compositionally biased toward low complexity. Over residues 2340–2357 (PEPEKASPKSESTEKPKP) the composition is skewed to basic and acidic residues. Low complexity-rich tracts occupy residues 2360-2373 (TISKQTDTTSQSSK) and 2382-2413 (PSDPQPSASQPQQQKQSQIIGRPPSTSQTTPV). The C2H2-type 16 zinc finger occupies 2436–2458 (YQCDQCTVAFPTLELWQEHQHMH). The span at 2499 to 2509 (LAQMPPQTGSS) shows a compositional bias: polar residues. Residues 2499 to 2553 (LAQMPPQTGSSHAAHPATVSGSMKRKLDDKEDNNCSEKEGGNSGEDQHRDKRLRT) are disordered. The span at 2523 to 2547 (RKLDDKEDNNCSEKEGGNSGEDQHR) shows a compositional bias: basic and acidic residues. A DNA-binding region (homeobox 3) is located at residues 2548–2607 (DKRLRTTITPEQLEILYEKYLLDSNPTRKMLDHIAREVGLKKRVVQVWFQNTRARERKGQ). A C2H2-type 17 zinc finger spans residues 2618 to 2641 (KRCPFCRALFKAKSALESHIRSRH). 2 disordered regions span residues 2704–2788 (EMSP…PKPL) and 2820–2875 (FSEK…PGHK). 2 stretches are compositionally biased toward polar residues: residues 2709–2718 (NLLSPSSFKA) and 2746–2773 (TSSINTAISDATTGDEGNNEMESTTGSS). The segment covering 2820 to 2829 (FSEKDGDHDQ) has biased composition (basic and acidic residues). The homeobox 4 DNA-binding region spans 2874-2933 (HKRFRTQMSNLQLKVLKACFSDYRTPTMQECEMLGNEIGLPKRVVQVWFQNARAKEKKFK). The C2H2-type 18; degenerate zinc finger occupies 2952-2976 (PECSLCGVKYSARLSIRDHIFSKQH). Disordered stretches follow at residues 3060 to 3174 (PSSL…KHLK) and 3287 to 3343 (LQKQ…LDSK). The segment covering 3084 to 3104 (PTSATSSPALSLSSAPSKPLL) has biased composition (low complexity). The segment covering 3105–3129 (QTPPPPPPPPPPPPPPPPPPPPPPS) has biased composition (pro residues). Residues 3159–3174 (IKEEELEANKPEKHLK) show a composition bias toward basic and acidic residues. Residues 3271–3316 (ALLQQYQQYQQNLQDSLQKQQKQQQEQQQKQVQAKSSKAENDQQQN) adopt a coiled-coil conformation. Positions 3287-3305 (LQKQQKQQQEQQQKQVQAK) are enriched in low complexity. Over residues 3321-3343 (SETKEDRSSATESTKEEPQLDSK) the composition is skewed to basic and acidic residues. The C2H2-type 19; degenerate zinc finger occupies 3360–3384 (FICRKCQMMFTDEDAAVNHQKSFCY). Residues 3404 to 3428 (YQCLACDVAISGNEALSQHLQSSLH) form a C2H2-type 20 zinc finger. Disordered regions lie at residues 3449 to 3468 (HSVCSPNPNTTSTSQSAASS) and 3518 to 3543 (TSGVQTSLPTESCSDESDSELSQKLE). The span at 3453-3468 (SPNPNTTSTSQSAASS) shows a compositional bias: low complexity.

The protein belongs to the krueppel C2H2-type zinc-finger protein family.

The protein localises to the nucleus. Functionally, may play a role in neural and muscle differentiation. May be involved in transcriptional regulation. The sequence is that of Zinc finger homeobox protein 4 (ZFHX4) from Gallus gallus (Chicken).